Consider the following 121-residue polypeptide: Large ribosomal subunit protein bL19 (121 aa).

It belongs to the bacterial ribosomal protein bL19 family.

Its function is as follows. This protein is located at the 30S-50S ribosomal subunit interface and may play a role in the structure and function of the aminoacyl-tRNA binding site. This Neisseria meningitidis serogroup C (strain 053442) protein is Large ribosomal subunit protein bL19.